The sequence spans 415 residues: tRNA(Ile)-lysidine synthase (415 aa).

36-41 (SGGRDS) is an ATP binding site.

Belongs to the tRNA(Ile)-lysidine synthase family.

The protein resides in the cytoplasm. It catalyses the reaction cytidine(34) in tRNA(Ile2) + L-lysine + ATP = lysidine(34) in tRNA(Ile2) + AMP + diphosphate + H(+). Its function is as follows. Ligates lysine onto the cytidine present at position 34 of the AUA codon-specific tRNA(Ile) that contains the anticodon CAU, in an ATP-dependent manner. Cytidine is converted to lysidine, thus changing the amino acid specificity of the tRNA from methionine to isoleucine. The sequence is that of tRNA(Ile)-lysidine synthase from Tropheryma whipplei (strain Twist) (Whipple's bacillus).